Here is a 613-residue protein sequence, read N- to C-terminus: AP-5 complex subunit mu (613 aa).

The 255-residue stretch at 309-563 (KQRLLFTIHE…DYAKVSFKIV (255 aa)) folds into the MHD domain. The disordered stretch occupies residues 501 to 522 (SPLQSRRKGDGDDEESEDESAE). Residues 511-521 (GDDEESEDESA) are compositionally biased toward acidic residues.

It belongs to the adaptor complexes medium subunit family. In terms of assembly, probably part of the adaptor protein complex 5 (AP-5).

The protein resides in the cytoplasmic vesicle membrane. The protein is AP-5 complex subunit mu (AP5M) of Arabidopsis thaliana (Mouse-ear cress).